The sequence spans 64 residues: Large ribosomal subunit protein uL29 (64 aa).

The protein belongs to the universal ribosomal protein uL29 family.

In Ligilactobacillus salivarius (strain UCC118) (Lactobacillus salivarius), this protein is Large ribosomal subunit protein uL29.